The sequence spans 277 residues: 3-methyl-2-oxobutanoate hydroxymethyltransferase (277 aa).

Positions 53 and 96 each coordinate Mg(2+). 3-methyl-2-oxobutanoate-binding positions include 53-54 (DS), D96, and K126. E128 is a Mg(2+) binding site. Catalysis depends on E195, which acts as the Proton acceptor.

This sequence belongs to the PanB family. Homodecamer; pentamer of dimers. Requires Mg(2+) as cofactor.

Its subcellular location is the cytoplasm. The catalysed reaction is 3-methyl-2-oxobutanoate + (6R)-5,10-methylene-5,6,7,8-tetrahydrofolate + H2O = 2-dehydropantoate + (6S)-5,6,7,8-tetrahydrofolate. The protein operates within cofactor biosynthesis; (R)-pantothenate biosynthesis; (R)-pantoate from 3-methyl-2-oxobutanoate: step 1/2. In terms of biological role, catalyzes the reversible reaction in which hydroxymethyl group from 5,10-methylenetetrahydrofolate is transferred onto alpha-ketoisovalerate to form ketopantoate. The sequence is that of 3-methyl-2-oxobutanoate hydroxymethyltransferase from Chlorobium phaeobacteroides (strain DSM 266 / SMG 266 / 2430).